The sequence spans 102 residues: MAKGQSLQDPFVNALRRERVPVSIYLVNGIKLQGQIESFDQFVILLKNTVSQMVYKHAISTVVPSRPVSHHSNNAGGGASNNYHHGSNAQGSTAQQDSEETE.

The Sm domain maps to 9 to 68; the sequence is DPFVNALRRERVPVSIYLVNGIKLQGQIESFDQFVILLKNTVSQMVYKHAISTVVPSRPV. Residues 63-102 form a disordered region; it reads VPSRPVSHHSNNAGGGASNNYHHGSNAQGSTAQQDSEETE. The segment covering 70–88 has biased composition (low complexity); the sequence is HHSNNAGGGASNNYHHGSN.

Belongs to the Hfq family. In terms of assembly, homohexamer.

Its function is as follows. RNA chaperone that binds small regulatory RNA (sRNAs) and mRNAs to facilitate mRNA translational regulation in response to envelope stress, environmental stress and changes in metabolite concentrations. Also binds with high specificity to tRNAs. The protein is RNA-binding protein Hfq of Salmonella heidelberg (strain SL476).